The sequence spans 354 residues: MRVTDFSFELPDSLIAHYPQPERSRCRLLSLEGPTGALTHGTFTDLLDKLNPGDLLVFNNTRVIPARLFGRKASGGKIEVLVERMLDDKRILAHIRASKAPKPGTELLLGDDESIHATMTARHGALFEVEFNDPRPVLDILNAIGHMPLPPYIDRPDEDADRELYQTVYSEKPGAVAAPTAGLHFDEPLLAALREKGVEMAFVTLHVGAGTFQPVRVDTIEDHIMHSEYAEVPQEVVDAVLAAKARGNRVIAVGTTSVRSLESAAQAAKSDLIEPFFGDTQIFIYPGYQYKVIDALITNFHLPESTLIMLVSAFAGYQHTMNAYKTAVEQKYRFFSYGDAMFITYNPQAISERP.

This sequence belongs to the QueA family. As to quaternary structure, monomer.

It is found in the cytoplasm. It carries out the reaction 7-aminomethyl-7-carbaguanosine(34) in tRNA + S-adenosyl-L-methionine = epoxyqueuosine(34) in tRNA + adenine + L-methionine + 2 H(+). The protein operates within tRNA modification; tRNA-queuosine biosynthesis. Its function is as follows. Transfers and isomerizes the ribose moiety from AdoMet to the 7-aminomethyl group of 7-deazaguanine (preQ1-tRNA) to give epoxyqueuosine (oQ-tRNA). The chain is S-adenosylmethionine:tRNA ribosyltransferase-isomerase from Salmonella paratyphi C (strain RKS4594).